We begin with the raw amino-acid sequence, 1380 residues long: Respiration factor 2 (1380 aa).

2 C2H2-type zinc fingers span residues 151 to 173 (FLCP…QHSH) and 179 to 202 (YLCI…QKLH). Positions 208–231 (TGDPRRMTPAPNSTSSFASKRRHS) are disordered. Serine 231 and serine 322 each carry phosphoserine. 4 disordered regions span residues 413–445 (NLNL…NSNN), 544–584 (SPKN…NIDP), 624–643 (SRSS…SLNH), and 652–688 (LNLS…KRRR). The span at 424-445 (QQQQQQQQQQNSTSSTIVNSNN) shows a compositional bias: low complexity. Residue serine 544 is modified to Phosphoserine. Positions 544 to 569 (SPKNPPTTVSDSSSTINFNPGTNNLL) are enriched in polar residues. Residues 575-584 (PNDKDSNIDP) are compositionally biased toward basic and acidic residues. The span at 624–634 (SRSSIPNKSPP) shows a compositional bias: low complexity. Serine 632 is subject to Phosphoserine. A compositionally biased stretch (polar residues) spans 652 to 681 (LNLSLNGSTDLPSTPQNQLKEPSYSDPISH).

Belongs to the RSF2/TDA9 family.

Its subcellular location is the nucleus. Transcription factor that regulates expression of both nuclear and mitochondrial genes, and more specifically those required for glycerol-based growth and respiration. The polypeptide is Respiration factor 2 (RSF2) (Saccharomyces cerevisiae (strain ATCC 204508 / S288c) (Baker's yeast)).